The primary structure comprises 69 residues: DNA-directed RNA polymerase subunit epsilon (69 aa).

The protein belongs to the RNA polymerase subunit epsilon family. RNAP is composed of a core of 2 alpha, a beta and a beta' subunit. The core is associated with a delta subunit, and at least one of epsilon or omega. When a sigma factor is associated with the core the holoenzyme is formed, which can initiate transcription.

The catalysed reaction is RNA(n) + a ribonucleoside 5'-triphosphate = RNA(n+1) + diphosphate. Functionally, a non-essential component of RNA polymerase (RNAP). This chain is DNA-directed RNA polymerase subunit epsilon, found in Shouchella clausii (strain KSM-K16) (Alkalihalobacillus clausii).